The primary structure comprises 670 residues: Probable urocanate hydratase (670 aa).

Residues 126-127, Gln-204, 250-252, Glu-270, 316-317, 338-342, 349-350, Tyr-398, and Gly-590 contribute to the NAD(+) site; these read GG, GMS, NV, QTSLH, and FY.

It belongs to the urocanase family. It depends on NAD(+) as a cofactor.

It carries out the reaction 4-imidazolone-5-propanoate = trans-urocanate + H2O. It functions in the pathway amino-acid degradation; L-histidine degradation into L-glutamate; N-formimidoyl-L-glutamate from L-histidine: step 2/3. This Caenorhabditis elegans protein is Probable urocanate hydratase.